The sequence spans 129 residues: uncharacterized protein (129 aa).

The region spanning 6 to 129 (QVHHIAIIAT…DGLPLELYEQ (124 aa)) is the VOC domain. Residues H9, E57, H78, and E125 each coordinate a divalent metal cation.

This sequence to B.subtilis YwkD.

This is an uncharacterized protein from Escherichia coli (strain K12).